The chain runs to 214 residues: Holliday junction branch migration complex subunit RuvA (214 aa).

Positions 1 to 63 are domain I; that stretch reads MISFLRGPVA…EDSMTLYGFA (63 aa). The interval 64–139 is domain II; that stretch reads DPDEREVFEI…KLVPHGTVNG (76 aa). A flexible linker region spans residues 139 to 143; that stretch reads GAPAS. The interval 144-214 is domain III; it reads PSAQWKPQVV…SAGRQVTARG (71 aa).

Belongs to the RuvA family. In terms of assembly, homotetramer. Forms an RuvA(8)-RuvB(12)-Holliday junction (HJ) complex. HJ DNA is sandwiched between 2 RuvA tetramers; dsDNA enters through RuvA and exits via RuvB. An RuvB hexamer assembles on each DNA strand where it exits the tetramer. Each RuvB hexamer is contacted by two RuvA subunits (via domain III) on 2 adjacent RuvB subunits; this complex drives branch migration. In the full resolvosome a probable DNA-RuvA(4)-RuvB(12)-RuvC(2) complex forms which resolves the HJ.

It is found in the cytoplasm. In terms of biological role, the RuvA-RuvB-RuvC complex processes Holliday junction (HJ) DNA during genetic recombination and DNA repair, while the RuvA-RuvB complex plays an important role in the rescue of blocked DNA replication forks via replication fork reversal (RFR). RuvA specifically binds to HJ cruciform DNA, conferring on it an open structure. The RuvB hexamer acts as an ATP-dependent pump, pulling dsDNA into and through the RuvAB complex. HJ branch migration allows RuvC to scan DNA until it finds its consensus sequence, where it cleaves and resolves the cruciform DNA. The polypeptide is Holliday junction branch migration complex subunit RuvA (Renibacterium salmoninarum (strain ATCC 33209 / DSM 20767 / JCM 11484 / NBRC 15589 / NCIMB 2235)).